The primary structure comprises 340 residues: Delta-aminolevulinic acid dehydratase (340 aa).

C134, C136, and C144 together coordinate Zn(2+). Residue K211 is the Schiff-base intermediate with substrate of the active site. 5-aminolevulinate contacts are provided by R221 and R233. K264 (schiff-base intermediate with substrate) is an active-site residue. Positions 291 and 330 each coordinate 5-aminolevulinate.

This sequence belongs to the ALAD family. Homooctamer. Requires Zn(2+) as cofactor.

The catalysed reaction is 2 5-aminolevulinate = porphobilinogen + 2 H2O + H(+). Its pathway is porphyrin-containing compound metabolism; protoporphyrin-IX biosynthesis; coproporphyrinogen-III from 5-aminolevulinate: step 1/4. Catalyzes an early step in the biosynthesis of tetrapyrroles. Binds two molecules of 5-aminolevulinate per subunit, each at a distinct site, and catalyzes their condensation to form porphobilinogen. This chain is Delta-aminolevulinic acid dehydratase (HEM2), found in Eremothecium gossypii (strain ATCC 10895 / CBS 109.51 / FGSC 9923 / NRRL Y-1056) (Yeast).